Consider the following 409-residue polypeptide: Na(+)-translocating NADH-quinone reductase subunit F (409 aa).

The chain crosses the membrane as a helical span at residues 5–25 (FIFGIIAFTALVLVLAVIILF). The 95-residue stretch at 34–128 (GDITISINND…SMDVELPEEI (95 aa)) folds into the 2Fe-2S ferredoxin-type domain. Positions 71, 77, 80, and 112 each coordinate [2Fe-2S] cluster. In terms of domain architecture, FAD-binding FR-type spans 131–271 (VKKWECTVIS…SGPFGEFFAK (141 aa)).

The protein belongs to the NqrF family. In terms of assembly, composed of six subunits; NqrA, NqrB, NqrC, NqrD, NqrE and NqrF. Requires [2Fe-2S] cluster as cofactor. FAD is required as a cofactor.

The protein resides in the cell inner membrane. It carries out the reaction a ubiquinone + n Na(+)(in) + NADH + H(+) = a ubiquinol + n Na(+)(out) + NAD(+). Its function is as follows. NQR complex catalyzes the reduction of ubiquinone-1 to ubiquinol by two successive reactions, coupled with the transport of Na(+) ions from the cytoplasm to the periplasm. The first step is catalyzed by NqrF, which accepts electrons from NADH and reduces ubiquinone-1 to ubisemiquinone by a one-electron transfer pathway. This Actinobacillus pleuropneumoniae serotype 5b (strain L20) protein is Na(+)-translocating NADH-quinone reductase subunit F.